The primary structure comprises 351 residues: Outer membrane porin PhoE (351 aa).

The N-terminal stretch at 1 to 21 is a signal peptide; that stretch reads MKKSTLALVVMGITASASVQA.

It belongs to the Gram-negative porin family. Homotrimer.

It is found in the cell outer membrane. In terms of biological role, uptake of inorganic phosphate, phosphorylated compounds, and some other negatively charged solutes. The polypeptide is Outer membrane porin PhoE (phoE) (Citrobacter freundii).